The following is a 168-amino-acid chain: MSDVTVTPSATSKLTGILKPGSYEIEKGHFSRYFSLNWWQLIVVVGIAISGIAAIANTYDAITGVDKDIEGCENVSNLRKKLEAKFIIIIVLSCLAVVGGIILAWLLRSGTNQRKLLTMGLTTGGILGILYALTIRFRGTSNMVKLGISWVSLLAFVLLGFFINTSGE.

Residues 36–56 traverse the membrane as a helical segment; that stretch reads LNWWQLIVVVGIAISGIAAIA. Residue Asn74 is glycosylated (N-linked (GlcNAc...) asparagine; by host). A run of 3 helical transmembrane segments spans residues 86 to 106, 115 to 135, and 143 to 163; these read FIII…LAWL, KLLT…ALTI, and MVKL…GFFI. Asn164 is a glycosylation site (N-linked (GlcNAc...) asparagine; by host).

The protein resides in the membrane. This is an uncharacterized protein from Acanthamoeba polyphaga mimivirus (APMV).